Reading from the N-terminus, the 314-residue chain is Olfactory receptor 14A2 (314 aa).

At 1 to 26 (MANVTLVTGFLLMGFSNIQKLRILYG) the chain is on the extracellular side. N-linked (GlcNAc...) asparagine glycosylation is present at Asn-3. Residues 27–47 (VLFLLIYLAALMSNLLIITLI) form a helical membrane-spanning segment. The Cytoplasmic segment spans residues 48-55 (TLDVKLQT). A helical membrane pass occupies residues 56 to 76 (PMYFFLKNLSFLDVFLVSVPI). The Extracellular portion of the chain corresponds to 77 to 91 (PKFIVNNLTHNNSIS). N-linked (GlcNAc...) asparagine glycosylation is present at Asn-83. A helical membrane pass occupies residues 92–112 (ILGCAFQLLLMTSFSAGEIFI). The cysteines at positions 95 and 177 are disulfide-linked. The Cytoplasmic segment spans residues 113–136 (LTAMSYDRYVAICCPLNYEVIMNT). Residues 137–157 (GVCVLMASVSWAIGGLFGTAY) form a helical membrane-spanning segment. At 158–193 (TAGTFSMPFCGSSVIPQFFCDVPSLLRISCSETLMV) the chain is on the extracellular side. A helical transmembrane segment spans residues 194 to 214 (IYAGIGVGACLSISCFICIVI). Residues 215–237 (SYIYIFSTVLKIPTTKGQSKAFS) are Cytoplasmic-facing. The helical transmembrane segment at 238–258 (TCFPHLTVFTVFIITAYFVYL) threads the bilayer. Residues 259–267 (KPPSNSPSV) are Extracellular-facing. A helical transmembrane segment spans residues 268 to 290 (IDRLLSVIYTVMPPVFNPVTYSL). The Cytoplasmic portion of the chain corresponds to 291 to 314 (RNNDMKCALIRLLQKTYGQEAYFI).

This sequence belongs to the G-protein coupled receptor 1 family.

It localises to the cell membrane. In terms of biological role, odorant receptor. In Homo sapiens (Human), this protein is Olfactory receptor 14A2 (OR14A2).